A 134-amino-acid polypeptide reads, in one-letter code: Phosphoribosyl-AMP cyclohydrolase (134 aa).

Aspartate 90 provides a ligand contact to Mg(2+). Cysteine 91 contacts Zn(2+). 2 residues coordinate Mg(2+): aspartate 92 and aspartate 94. Zn(2+)-binding residues include cysteine 107 and cysteine 114.

This sequence belongs to the PRA-CH family. Homodimer. Mg(2+) is required as a cofactor. It depends on Zn(2+) as a cofactor.

It is found in the cytoplasm. It carries out the reaction 1-(5-phospho-beta-D-ribosyl)-5'-AMP + H2O = 1-(5-phospho-beta-D-ribosyl)-5-[(5-phospho-beta-D-ribosylamino)methylideneamino]imidazole-4-carboxamide. The protein operates within amino-acid biosynthesis; L-histidine biosynthesis; L-histidine from 5-phospho-alpha-D-ribose 1-diphosphate: step 3/9. In terms of biological role, catalyzes the hydrolysis of the adenine ring of phosphoribosyl-AMP. The protein is Phosphoribosyl-AMP cyclohydrolase of Arthrobacter sp. (strain FB24).